A 229-amino-acid polypeptide reads, in one-letter code: ATPase SWSAP1 (229 aa).

The tract at residues 209-229 (PWPTQAGDPSSGKGSSSGGQP) is disordered.

As to quaternary structure, interacts with ZSWIM7; they form a functional complex involved in homologous recombination repair and stabilize each other. Interacts with RAD51, RAD51B, RAD51C, RAD51D and XRCC3; involved in homologous recombination repair.

It is found in the nucleus. ATPase which is preferentially stimulated by single-stranded DNA and is involved in homologous recombination repair (HRR). Has a DNA-binding activity which is independent of its ATPase activity. The sequence is that of ATPase SWSAP1 (SWSAP1) from Homo sapiens (Human).